The sequence spans 449 residues: Trigger factor (449 aa).

Residues 172 to 257 enclose the PPIase FKBP-type domain; the sequence is GDEVRFDFKG…IKEITNVKPQ (86 aa).

Belongs to the FKBP-type PPIase family. Tig subfamily.

Its subcellular location is the cytoplasm. It carries out the reaction [protein]-peptidylproline (omega=180) = [protein]-peptidylproline (omega=0). Its function is as follows. Involved in protein export. Acts as a chaperone by maintaining the newly synthesized protein in an open conformation. Functions as a peptidyl-prolyl cis-trans isomerase. The sequence is that of Trigger factor from Ureaplasma parvum serovar 3 (strain ATCC 27815 / 27 / NCTC 11736).